The primary structure comprises 68 residues: Suppressor of RNA silencing (68 aa).

Residues Leu23–Val43 traverse the membrane as a helical segment.

It belongs to the virgaviridae suppressor of RNA silencing family.

The protein resides in the host endoplasmic reticulum membrane. Its function is as follows. Suppressor of RNA-mediated gene silencing, also known as post-transcriptional gene silencing (PTGS), a mechanism of plant viral defense that performs sequence-specific inhibition of viral mRNAs expression. The RNA silencing suppression activity is variable depending on the origin of the isolate. This chain is Suppressor of RNA silencing (8K protein), found in Solanum nigrum (Black nightshade).